We begin with the raw amino-acid sequence, 151 residues long: Immunity protein YezG (151 aa).

A coiled-coil region spans residues 62–90 (KDIFKTLLRELRELFEELRTEHRNNNDDV).

Interacts with cognate toxin YeeF but not with non-cognate toxin YobL. The interaction probably inhibits the toxic activity of YeeF. May bind with a stoichiometry of 2:2 to YeeF.

It is found in the cytoplasm. In terms of biological role, immunity component of one of 6 LXG toxin-immunity modules in this strain. They promote kin selection, mediate competition in biofilms, and drive spatial segregation of different strains, indicating that LXG toxins may help avoid warfare between strains in biofilms. Mediates intercellular competition during biofilm formation; disruption of the operon disadvantages the bacteria, but overexpression of the cognate immunity protein restores growth in competition with wild-type. In situ neutralizes the toxic effect of cognate toxin YeeF. Probably neutralizes the ability to inhibit growth of cognate toxin YeeF. Probably does not have immunity protein activity on other LXG toxins. This Bacillus subtilis (strain 168) protein is Immunity protein YezG (yezG).